The chain runs to 238 residues: uncharacterized protein (238 aa).

Residues 1–68 form the HTH gntR-type domain; the sequence is MIYKSIAERL…HGSGTYLVRK (68 aa). The H-T-H motif DNA-binding region spans 28-47; the sequence is EKKLAEEFAVSRMTIRKAID.

This is an uncharacterized protein from Escherichia coli (strain K12).